A 327-amino-acid polypeptide reads, in one-letter code: 4-diphosphocytidyl-2-C-methyl-D-erythritol kinase (327 aa).

The active site involves Lys14. 97 to 107 (PDGAGLGGGSA) lines the ATP pocket. Residue Asp140 is part of the active site.

This sequence belongs to the GHMP kinase family. IspE subfamily.

It carries out the reaction 4-CDP-2-C-methyl-D-erythritol + ATP = 4-CDP-2-C-methyl-D-erythritol 2-phosphate + ADP + H(+). It functions in the pathway isoprenoid biosynthesis; isopentenyl diphosphate biosynthesis via DXP pathway; isopentenyl diphosphate from 1-deoxy-D-xylulose 5-phosphate: step 3/6. Its function is as follows. Catalyzes the phosphorylation of the position 2 hydroxy group of 4-diphosphocytidyl-2C-methyl-D-erythritol. In Oleidesulfovibrio alaskensis (strain ATCC BAA-1058 / DSM 17464 / G20) (Desulfovibrio alaskensis), this protein is 4-diphosphocytidyl-2-C-methyl-D-erythritol kinase.